A 317-amino-acid polypeptide reads, in one-letter code: Acetyl-coenzyme A carboxylase carboxyl transferase subunit alpha (317 aa).

In terms of domain architecture, CoA carboxyltransferase C-terminal spans 40-293 (LEKRSADALK…GDIIAASLRS (254 aa)).

Belongs to the AccA family. As to quaternary structure, acetyl-CoA carboxylase is a heterohexamer composed of biotin carboxyl carrier protein (AccB), biotin carboxylase (AccC) and two subunits each of ACCase subunit alpha (AccA) and ACCase subunit beta (AccD).

The protein localises to the cytoplasm. It catalyses the reaction N(6)-carboxybiotinyl-L-lysyl-[protein] + acetyl-CoA = N(6)-biotinyl-L-lysyl-[protein] + malonyl-CoA. The protein operates within lipid metabolism; malonyl-CoA biosynthesis; malonyl-CoA from acetyl-CoA: step 1/1. In terms of biological role, component of the acetyl coenzyme A carboxylase (ACC) complex. First, biotin carboxylase catalyzes the carboxylation of biotin on its carrier protein (BCCP) and then the CO(2) group is transferred by the carboxyltransferase to acetyl-CoA to form malonyl-CoA. The protein is Acetyl-coenzyme A carboxylase carboxyl transferase subunit alpha of Brucella abortus (strain S19).